A 556-amino-acid polypeptide reads, in one-letter code: Formate--tetrahydrofolate ligase (556 aa).

Thr-65–Thr-72 is a binding site for ATP.

The protein belongs to the formate--tetrahydrofolate ligase family.

It carries out the reaction (6S)-5,6,7,8-tetrahydrofolate + formate + ATP = (6R)-10-formyltetrahydrofolate + ADP + phosphate. The protein operates within one-carbon metabolism; tetrahydrofolate interconversion. The sequence is that of Formate--tetrahydrofolate ligase from Carboxydothermus hydrogenoformans (strain ATCC BAA-161 / DSM 6008 / Z-2901).